The primary structure comprises 421 residues: Testin (421 aa).

Residues methionine 92 to aspartate 199 enclose the PET domain. A disordered region spans residues lysine 134–cysteine 164. Positions proline 155–cysteine 164 are enriched in basic and acidic residues. 3 consecutive LIM zinc-binding domains span residues tyrosine 234 to glutamate 297, proline 299 to valine 359, and glutamine 362 to serine 421.

Belongs to the prickle / espinas / testin family. Interacts via LIM domain 1 with ZYX. Interacts (via LIM domain 3) with ENAH and VASP. Interacts with ALKBH4, talin, actin, alpha-actinin, GRIP1 and PXN. Interacts (via LIM domain 2) with ACTL7A (via N-terminus). Heterodimer with ACTL7A; the heterodimer interacts with ENAH to form a heterotrimer.

The protein localises to the cytoplasm. The protein resides in the cell junction. It is found in the focal adhesion. Its function is as follows. Scaffold protein that may play a role in cell adhesion, cell spreading and in the reorganization of the actin cytoskeleton. Plays a role in the regulation of cell proliferation. May act as a tumor suppressor. This Rhinolophus ferrumequinum (Greater horseshoe bat) protein is Testin (TES).